We begin with the raw amino-acid sequence, 431 residues long: Enolase (431 aa).

Q168 contributes to the (2R)-2-phosphoglycerate binding site. E210 serves as the catalytic Proton donor. Positions 247, 291, and 318 each coordinate Mg(2+). The (2R)-2-phosphoglycerate site is built by K343, R372, S373, and K394. K343 acts as the Proton acceptor in catalysis.

It belongs to the enolase family. As to quaternary structure, component of the RNA degradosome, a multiprotein complex involved in RNA processing and mRNA degradation. Mg(2+) is required as a cofactor.

It localises to the cytoplasm. The protein resides in the secreted. It is found in the cell surface. It carries out the reaction (2R)-2-phosphoglycerate = phosphoenolpyruvate + H2O. Its pathway is carbohydrate degradation; glycolysis; pyruvate from D-glyceraldehyde 3-phosphate: step 4/5. Catalyzes the reversible conversion of 2-phosphoglycerate (2-PG) into phosphoenolpyruvate (PEP). It is essential for the degradation of carbohydrates via glycolysis. The sequence is that of Enolase from Acinetobacter baumannii (strain SDF).